Consider the following 387-residue polypeptide: Succinate--CoA ligase [ADP-forming] subunit beta (387 aa).

In terms of domain architecture, ATP-grasp spans 9 to 236 (KELFAKHNVP…RAATDPLELK (228 aa)). ATP contacts are provided by residues K45, 52-54 (GRG), S94, and E99. 2 residues coordinate Mg(2+): N191 and D205. Substrate-binding positions include N256 and 318–320 (GIT).

It belongs to the succinate/malate CoA ligase beta subunit family. In terms of assembly, heterotetramer of two alpha and two beta subunits. It depends on Mg(2+) as a cofactor.

It carries out the reaction succinate + ATP + CoA = succinyl-CoA + ADP + phosphate. The catalysed reaction is GTP + succinate + CoA = succinyl-CoA + GDP + phosphate. It participates in carbohydrate metabolism; tricarboxylic acid cycle; succinate from succinyl-CoA (ligase route): step 1/1. Succinyl-CoA synthetase functions in the citric acid cycle (TCA), coupling the hydrolysis of succinyl-CoA to the synthesis of either ATP or GTP and thus represents the only step of substrate-level phosphorylation in the TCA. The beta subunit provides nucleotide specificity of the enzyme and binds the substrate succinate, while the binding sites for coenzyme A and phosphate are found in the alpha subunit. The polypeptide is Succinate--CoA ligase [ADP-forming] subunit beta (Mycobacterium tuberculosis (strain CDC 1551 / Oshkosh)).